Consider the following 138-residue polypeptide: Nucleoside diphosphate kinase (138 aa).

ATP is bound by residues Lys-11, Phe-59, Arg-87, Thr-93, Arg-104, and Asn-114. His-117 acts as the Pros-phosphohistidine intermediate in catalysis.

Belongs to the NDK family. Mg(2+) is required as a cofactor.

Its subcellular location is the cytoplasm. It catalyses the reaction a 2'-deoxyribonucleoside 5'-diphosphate + ATP = a 2'-deoxyribonucleoside 5'-triphosphate + ADP. It carries out the reaction a ribonucleoside 5'-diphosphate + ATP = a ribonucleoside 5'-triphosphate + ADP. Its function is as follows. Major role in the synthesis of nucleoside triphosphates other than ATP. The ATP gamma phosphate is transferred to the NDP beta phosphate via a ping-pong mechanism, using a phosphorylated active-site intermediate. The sequence is that of Nucleoside diphosphate kinase from Saccharolobus islandicus (strain Y.N.15.51 / Yellowstone #2) (Sulfolobus islandicus).